Consider the following 303-residue polypeptide: Methionyl-tRNA formyltransferase (303 aa).

108–111 (SDLP) is a binding site for (6S)-5,6,7,8-tetrahydrofolate.

Belongs to the Fmt family.

It catalyses the reaction L-methionyl-tRNA(fMet) + (6R)-10-formyltetrahydrofolate = N-formyl-L-methionyl-tRNA(fMet) + (6S)-5,6,7,8-tetrahydrofolate + H(+). In terms of biological role, attaches a formyl group to the free amino group of methionyl-tRNA(fMet). The formyl group appears to play a dual role in the initiator identity of N-formylmethionyl-tRNA by promoting its recognition by IF2 and preventing the misappropriation of this tRNA by the elongation apparatus. This Rickettsia peacockii (strain Rustic) protein is Methionyl-tRNA formyltransferase.